We begin with the raw amino-acid sequence, 211 residues long: Thymidylate kinase (211 aa).

An ATP-binding site is contributed by Gly7–Thr14.

The protein belongs to the thymidylate kinase family.

The catalysed reaction is dTMP + ATP = dTDP + ADP. Functionally, phosphorylation of dTMP to form dTDP in both de novo and salvage pathways of dTTP synthesis. In Mesoplasma florum (strain ATCC 33453 / NBRC 100688 / NCTC 11704 / L1) (Acholeplasma florum), this protein is Thymidylate kinase.